The primary structure comprises 172 residues: C-phycocyanin beta chain (172 aa).

Asn-72 is subject to N4-methylasparagine. (2R,3E)-phycocyanobilin is bound by residues Cys-82 and Cys-153.

This sequence belongs to the phycobiliprotein family. In terms of assembly, heterodimer of an alpha and a beta subunit, which further assembles into trimers and the trimers into hexamers. The basic functional unit of phycobiliproteins is a ring-shaped hexamer formed from two back-to-back trimers contacting via the alpha chain subunits. The trimers are composed of alpha/beta subunit heterodimers arranged around a three-fold axis of symmetry. The phycoerythrins also contain a gamma subunit which is located in the center of the hexamer. In terms of processing, contains two covalently linked bilin chromophores.

It localises to the plastid. Its subcellular location is the chloroplast thylakoid membrane. Functionally, light-harvesting photosynthetic bile pigment-protein from the phycobiliprotein complex (phycobilisome, PBS). Phycocyanin is the major phycobiliprotein in the PBS rod. The polypeptide is C-phycocyanin beta chain (cpcB) (Aglaothamnion neglectum (Red alga)).